Here is a 416-residue protein sequence, read N- to C-terminus: Homeobox protein ceh-62 (416 aa).

The span at Thr103–Ile113 shows a compositional bias: low complexity. 2 disordered regions span residues Thr103–Arg144 and Phe178–Thr247. Residues Gln118–Asn127 are compositionally biased toward polar residues. The segment at residues Ser130 to Arg189 is a DNA-binding region (homeobox). Over residues Asn193–Pro218 the composition is skewed to low complexity. A compositionally biased stretch (polar residues) spans Thr219–Asp240.

It localises to the nucleus. This Caenorhabditis elegans protein is Homeobox protein ceh-62.